The following is a 62-amino-acid chain: Translational regulator CsrA 3 (62 aa).

This sequence belongs to the CsrA/RsmA family. In terms of assembly, homodimer; the beta-strands of each monomer intercalate to form a hydrophobic core, while the alpha-helices form wings that extend away from the core.

Its subcellular location is the cytoplasm. Its function is as follows. A key translational regulator that binds mRNA to regulate translation initiation and/or mRNA stability. Mediates global changes in gene expression, shifting from rapid growth to stress survival by linking envelope stress, the stringent response and the catabolite repression systems. Usually binds in the 5'-UTR; binding at or near the Shine-Dalgarno sequence prevents ribosome-binding, repressing translation, binding elsewhere in the 5'-UTR can activate translation and/or stabilize the mRNA. Its function is antagonized by small RNA(s). This is Translational regulator CsrA 3 from Pseudomonas syringae pv. tomato (strain ATCC BAA-871 / DC3000).